The sequence spans 232 residues: Phosphoribosylaminoimidazole-succinocarboxamide synthase (232 aa).

This sequence belongs to the SAICAR synthetase family.

It carries out the reaction 5-amino-1-(5-phospho-D-ribosyl)imidazole-4-carboxylate + L-aspartate + ATP = (2S)-2-[5-amino-1-(5-phospho-beta-D-ribosyl)imidazole-4-carboxamido]succinate + ADP + phosphate + 2 H(+). The protein operates within purine metabolism; IMP biosynthesis via de novo pathway; 5-amino-1-(5-phospho-D-ribosyl)imidazole-4-carboxamide from 5-amino-1-(5-phospho-D-ribosyl)imidazole-4-carboxylate: step 1/2. The polypeptide is Phosphoribosylaminoimidazole-succinocarboxamide synthase (Finegoldia magna (strain ATCC 29328 / DSM 20472 / WAL 2508) (Peptostreptococcus magnus)).